The following is a 508-amino-acid chain: Glycerol kinase (508 aa).

Thr-14 is a binding site for ADP. Residues Thr-14, Thr-15, and Ser-16 each contribute to the ATP site. Thr-14 serves as a coordination point for sn-glycerol 3-phosphate. Residue Arg-18 participates in ADP binding. Sn-glycerol 3-phosphate is bound by residues Arg-84, Glu-85, and Tyr-136. Positions 84, 85, and 136 each coordinate glycerol. Residue His-232 is modified to Phosphohistidine; by HPr. Residue Asp-246 participates in sn-glycerol 3-phosphate binding. Residues Asp-246 and Gln-247 each coordinate glycerol. 2 residues coordinate ADP: Thr-268 and Gly-311. ATP-binding residues include Thr-268, Gly-311, Gln-315, and Gly-412. Residues Gly-412 and Asn-416 each coordinate ADP.

It belongs to the FGGY kinase family. In terms of assembly, homotetramer and homodimer (in equilibrium). In terms of processing, the phosphoenolpyruvate-dependent sugar phosphotransferase system (PTS), including enzyme I, and histidine-containing protein (HPr) are required for the phosphorylation, which leads to the activation of the enzyme.

The enzyme catalyses glycerol + ATP = sn-glycerol 3-phosphate + ADP + H(+). Its pathway is polyol metabolism; glycerol degradation via glycerol kinase pathway; sn-glycerol 3-phosphate from glycerol: step 1/1. Activated by phosphorylation and inhibited by fructose 1,6-bisphosphate (FBP). Functionally, key enzyme in the regulation of glycerol uptake and metabolism. Catalyzes the phosphorylation of glycerol to yield sn-glycerol 3-phosphate. The polypeptide is Glycerol kinase (Streptococcus pyogenes serotype M4 (strain MGAS10750)).